The chain runs to 519 residues: (3S,6E)-nerolidol synthase 1 (519 aa).

Positions 273, 277, 417, 421, and 425 each coordinate Mg(2+). The DDXXD motif signature appears at 273–277 (DDIFD).

It belongs to the terpene synthase family. Tpsg subfamily. Mg(2+) serves as cofactor. Requires Mn(2+) as cofactor. In terms of tissue distribution, expressed in receptacle tissue. Not detected in leaves or green fruit.

It is found in the cytoplasm. The protein resides in the cytosol. It catalyses the reaction (2E,6E)-farnesyl diphosphate + H2O = (3S,6E)-nerolidol + diphosphate. It participates in secondary metabolite biosynthesis; terpenoid biosynthesis. Its function is as follows. Involved in monoterpene (C10) and sesquiterpene (C15) biosynthesis. Converts geranyl diphosphate (GPP) into S-linalool and farnesyl diphosphate (FPP) into (3S)-E-nerolidol. Exclusively present and highly expressed in the fruit of cultivated (octaploid) varieties. In Fragaria ananassa (Strawberry), this protein is (3S,6E)-nerolidol synthase 1.